We begin with the raw amino-acid sequence, 277 residues long: Cis-2,3-dihydrobiphenyl-2,3-diol dehydrogenase (277 aa).

NAD(+) contacts are provided by residues 9 to 36 (LITGGASGLGRALVDRFVAEGAKVAVLD) and aspartate 59. Serine 142 is a substrate binding site. The Proton acceptor role is filled by tyrosine 155. Lysine 159 lines the NAD(+) pocket.

The protein belongs to the short-chain dehydrogenases/reductases (SDR) family.

The enzyme catalyses (2R,3S)-3-phenylcyclohexa-3,5-diene-1,2-diol + NAD(+) = biphenyl-2,3-diol + NADH + H(+). It participates in xenobiotic degradation; biphenyl degradation; 2-hydroxy-2,4-pentadienoate and benzoate from biphenyl: step 2/4. This chain is Cis-2,3-dihydrobiphenyl-2,3-diol dehydrogenase (bphB), found in Paraburkholderia xenovorans (strain LB400).